Reading from the N-terminus, the 446-residue chain is tRNA modification GTPase MnmE (446 aa).

The (6S)-5-formyl-5,6,7,8-tetrahydrofolate site is built by Arg24, Glu81, and Lys120. Residues Gly216–Leu368 enclose the TrmE-type G domain. Asn226 contacts K(+). GTP contacts are provided by residues Asn226 to Ser231, Thr245 to Thr251, and Asp270 to Gly273. Ser230 serves as a coordination point for Mg(2+). Residues Thr245, Val247, and Thr250 each coordinate K(+). Thr251 is a binding site for Mg(2+). Lys446 contacts (6S)-5-formyl-5,6,7,8-tetrahydrofolate.

This sequence belongs to the TRAFAC class TrmE-Era-EngA-EngB-Septin-like GTPase superfamily. TrmE GTPase family. Homodimer. Heterotetramer of two MnmE and two MnmG subunits. The cofactor is K(+).

It localises to the cytoplasm. Exhibits a very high intrinsic GTPase hydrolysis rate. Involved in the addition of a carboxymethylaminomethyl (cmnm) group at the wobble position (U34) of certain tRNAs, forming tRNA-cmnm(5)s(2)U34. The polypeptide is tRNA modification GTPase MnmE (Xanthomonas oryzae pv. oryzae (strain PXO99A)).